Here is a 281-residue protein sequence, read N- to C-terminus: Probable splicing factor, arginine/serine-rich 2 (281 aa).

One can recognise an RRM 1 domain in the interval 2–72; sequence VRVYIGRLPN…ERVILEFPRR (71 aa). 2 stretches are compositionally biased toward basic and acidic residues: residues 78–97 and 168–190; these read EERS…KGGE and KLQG…DRSR. Disordered regions lie at residues 78-100 and 168-281; these read EERS…ERQF and KLQG…SASP. One can recognise an RRM 2 domain in the interval 112-186; sequence FRLVIDNLST…RKLKCTDETR (75 aa). The span at 191–215 shows a compositional bias: basic residues; it reads SRSPRRRSRSRSPTRSRSPPARRRS. Residues 216–225 are compositionally biased toward basic and acidic residues; sequence PGSDRSDRKS. Residues 245–254 show a composition bias toward basic residues; sequence RSRSGGRRSR.

This sequence belongs to the splicing factor SR family. Post-translationally, extensively phosphorylated on serine residues in the RS domain.

Its subcellular location is the nucleus. In terms of biological role, plays a functionally redundant role in spermatogenesis and growth rate control. Required for the development of somatic gonad structures and for progression from larval stage to adulthood. The chain is Probable splicing factor, arginine/serine-rich 2 (rsp-2) from Caenorhabditis elegans.